A 349-amino-acid chain; its full sequence is CCN family member 2 (349 aa).

The N-terminal stretch at 1–26 (MSATGLSPVRCAFVLLLALCSRPASG) is a signal peptide. The region spanning 27 to 98 (QDCSGQCQCA…NRKIGVCTAK (72 aa)) is the IGFBP N-terminal domain. Cystine bridges form between cysteine 29–cysteine 54, cysteine 33–cysteine 56, cysteine 35–cysteine 57, cysteine 43–cysteine 60, cysteine 68–cysteine 82, and cysteine 74–cysteine 95. Residues 101–167 (APCVFGGTVY…GKCCEEWVCD (67 aa)) enclose the VWFC domain. One can recognise a TSP type-1 domain in the interval 198 to 243 (NCLVQTTEWSACSKTCGMGISTRVTNDNAFCRLEKQSRLCMVRPCE). Positions 247–349 (EENIKKGKKC…YYRKMYGDMA (103 aa)) are heparin-binding. Intrachain disulfides connect cysteine 256/cysteine 293, cysteine 273/cysteine 307, cysteine 284/cysteine 323, cysteine 287/cysteine 325, and cysteine 292/cysteine 329. Residues 256 to 330 (CIRTPKISKP…KTCACHYNCP (75 aa)) form the CTCK domain.

Belongs to the CCN family. Monomer. Interacts with TSKU.

The protein localises to the secreted. The protein resides in the extracellular space. It localises to the extracellular matrix. Major connective tissue mitoattractant secreted by vascular endothelial cells. Promotes proliferation and differentiation of chondrocytes. Is involved in the stimulation of osteoblast differentiation and has a critical role in osteogenesis. Mediates heparin- and divalent cation-dependent cell adhesion in many cell types including fibroblasts, myofibroblasts, endothelial and epithelial cells. Enhances fibroblast growth factor-induced DNA synthesis. The chain is CCN family member 2 (CCN2) from Sus scrofa (Pig).